Consider the following 411-residue polypeptide: LL-diaminopimelate aminotransferase (411 aa).

Tyr15 and Gly42 together coordinate substrate. Pyridoxal 5'-phosphate contacts are provided by residues Tyr72, 108 to 109, Tyr132, Asn188, Tyr219, and 247 to 249; these read AK and SFS. Substrate is bound by residues Lys109, Tyr132, and Asn188. Lys250 carries the post-translational modification N6-(pyridoxal phosphate)lysine. Positions 258 and 293 each coordinate pyridoxal 5'-phosphate. Residues Asn293 and Arg389 each coordinate substrate.

This sequence belongs to the class-I pyridoxal-phosphate-dependent aminotransferase family. LL-diaminopimelate aminotransferase subfamily. Homodimer. It depends on pyridoxal 5'-phosphate as a cofactor.

It catalyses the reaction (2S,6S)-2,6-diaminopimelate + 2-oxoglutarate = (S)-2,3,4,5-tetrahydrodipicolinate + L-glutamate + H2O + H(+). Its pathway is amino-acid biosynthesis; L-lysine biosynthesis via DAP pathway; LL-2,6-diaminopimelate from (S)-tetrahydrodipicolinate (aminotransferase route): step 1/1. Functionally, involved in the synthesis of meso-diaminopimelate (m-DAP or DL-DAP), required for both lysine and peptidoglycan biosynthesis. Catalyzes the direct conversion of tetrahydrodipicolinate to LL-diaminopimelate. This Desulfitobacterium hafniense (strain Y51) protein is LL-diaminopimelate aminotransferase.